The primary structure comprises 229 residues: uncharacterized protein (229 aa).

Residues 66 to 94 (GHEKLQIQSALRDIESAENQARVQQCNAK) adopt a coiled-coil conformation.

This is an uncharacterized protein from Ostreid herpesvirus 1 (isolate France) (OsHV-1).